The primary structure comprises 157 residues: Transcription elongation factor GreA (157 aa).

The stretch at 10–76 (THEGKQKLEQ…TLENMIRNAK (67 aa)) forms a coiled coil.

This sequence belongs to the GreA/GreB family.

Functionally, necessary for efficient RNA polymerase transcription elongation past template-encoded arresting sites. The arresting sites in DNA have the property of trapping a certain fraction of elongating RNA polymerases that pass through, resulting in locked ternary complexes. Cleavage of the nascent transcript by cleavage factors such as GreA or GreB allows the resumption of elongation from the new 3'terminus. GreA releases sequences of 2 to 3 nucleotides. This Bacillus velezensis (strain DSM 23117 / BGSC 10A6 / LMG 26770 / FZB42) (Bacillus amyloliquefaciens subsp. plantarum) protein is Transcription elongation factor GreA.